A 1210-amino-acid chain; its full sequence is A disintegrin and metalloproteinase with thrombospondin motifs 19 (1210 aa).

The first 30 residues, 1–30, serve as a signal peptide directing secretion; the sequence is MGPEMRLTRICCCCCLLYQLGFLSHGTTSG. The propeptide occupies 31-319; that stretch reads LQLTPDLEEW…KIADNRREKR (289 aa). N-linked (GlcNAc...) asparagine glycosylation is present at N54. The segment at 55 to 166 is disordered; sequence ATGLSGGSSD…PAQQEEPSAE (112 aa). Residues 69-78 are compositionally biased toward gly residues; the sequence is RSSGGGGRGQ. Residues 84–98 are compositionally biased toward basic and acidic residues; it reads REVRSVARAPQEEAT. Residues 113-122 show a composition bias toward acidic residues; that stretch reads GAEDEEELES. Polar residues predominate over residues 130-139; that stretch reads SGDTALSSGT. The span at 143 to 158 shows a compositional bias: pro residues; it reads WQPPLPPQRPSSPPPA. A glycan (N-linked (GlcNAc...) asparagine) is linked at N263. The Cysteine switch motif lies at 295–302; that stretch reads HHCGVISD. C297 serves as a coordination point for Zn(2+). The Peptidase M12B domain maps to 328 to 548; that stretch reads YNIETVVVAD…KASSCLLHTD (221 aa). 11 disulfides stabilise this stretch: C404-C469, C444-C451, C463-C543, C502-C527, C572-C596, C583-C604, C591-C623, C617-C628, C648-C683, C652-C688, and C663-C673. H485 is a binding site for Zn(2+). E486 is an active-site residue. Zn(2+) contacts are provided by H489 and H495. The 88-residue stretch at 549–636 folds into the Disintegrin domain; that stretch reads PQSLSSVLVP…ECTRRTPAPE (88 aa). Residues 637–689 enclose the TSP type-1 1 domain; sequence HLAGEWSPWSSCSRSCSSGVSSRERKCPGLGSEARDCNGPRKQYRICENPPCP. The interval 794 to 917 is spacer; that stretch reads VIKGDFNHTR…PDNQSSKEPG (124 aa). N-linked (GlcNAc...) asparagine glycosylation is found at N800, N910, N931, N952, and N1012. TSP type-1 domains follow at residues 918 to 978, 979 to 1040, 1042 to 1086, and 1090 to 1147; these read PLFM…NEQP, CQTR…QDCM, VWEA…EDCE, and KCYV…QPCN. Cystine bridges form between C991–C1034, C995–C1039, and C1006–C1023. Positions 1163–1202 constitute a PLAC domain; the sequence is LTFKCLGDQWPVYCRVIREKNLCQDMRWYQRCCETCRDFY.

It depends on Zn(2+) as a cofactor. Post-translationally, the precursor is cleaved by a furin endopeptidase. In terms of processing, glycosylated. Can be O-fucosylated by POFUT2 on a serine or a threonine residue found within the consensus sequence C1-X(2)-(S/T)-C2-G of the TSP type-1 repeat domains where C1 and C2 are the first and second cysteine residue of the repeat, respectively. Fucosylated repeats can then be further glycosylated by the addition of a beta-1,3-glucose residue by the glucosyltransferase, B3GALTL. Fucosylation mediates the efficient secretion of ADAMTS family members. Can also be C-glycosylated with one or two mannose molecules on tryptophan residues within the consensus sequence W-X-X-W of the TPRs, and N-glycosylated. These other glycosylations can also facilitate secretion. In terms of tissue distribution, expressed predominantly in fetal ovary, low levels of expression is also detected in kidney, heart, skeletal muscle, lung and testis.

The protein localises to the secreted. Its subcellular location is the extracellular space. The protein resides in the extracellular matrix. This chain is A disintegrin and metalloproteinase with thrombospondin motifs 19 (Adamts19), found in Mus musculus (Mouse).